A 463-amino-acid chain; its full sequence is tRNA-2-methylthio-N(6)-dimethylallyladenosine synthase (463 aa).

In terms of domain architecture, MTTase N-terminal spans 5–125; sequence RKLHIKSYGC…LPQLLAKAEQ (121 aa). Positions 14, 50, 88, 166, 170, and 173 each coordinate [4Fe-4S] cluster. In terms of domain architecture, Radical SAM core spans 152-384; the sequence is RARGISAFVT…QQLIDQQQSA (233 aa). Residues 387-449 enclose the TRAM domain; it reads KAAIGRTVEV…RYSLLGELAS (63 aa).

Belongs to the methylthiotransferase family. MiaB subfamily. As to quaternary structure, monomer. Requires [4Fe-4S] cluster as cofactor.

The protein localises to the cytoplasm. It carries out the reaction N(6)-dimethylallyladenosine(37) in tRNA + (sulfur carrier)-SH + AH2 + 2 S-adenosyl-L-methionine = 2-methylsulfanyl-N(6)-dimethylallyladenosine(37) in tRNA + (sulfur carrier)-H + 5'-deoxyadenosine + L-methionine + A + S-adenosyl-L-homocysteine + 2 H(+). In terms of biological role, catalyzes the methylthiolation of N6-(dimethylallyl)adenosine (i(6)A), leading to the formation of 2-methylthio-N6-(dimethylallyl)adenosine (ms(2)i(6)A) at position 37 in tRNAs that read codons beginning with uridine. In Rhodopseudomonas palustris (strain ATCC BAA-98 / CGA009), this protein is tRNA-2-methylthio-N(6)-dimethylallyladenosine synthase.